Here is a 194-residue protein sequence, read N- to C-terminus: Sigma factor AlgU negative regulatory protein (194 aa).

The helical transmembrane segment at 89 to 105 (LAVAASVTLAVLAGVRL) threads the bilayer.

It belongs to the RseA family.

The protein localises to the cell membrane. Negative regulator of the sigma factor AlgU. Plays a role in the differentiation of P.aeruginosa into the alginate-producing form. Inactivation of mucA causes a switch from the non-mucoid to mucoid state resulting in constitutive expression of alginate biosynthetic genes. This Pseudomonas aeruginosa (strain ATCC 15692 / DSM 22644 / CIP 104116 / JCM 14847 / LMG 12228 / 1C / PRS 101 / PAO1) protein is Sigma factor AlgU negative regulatory protein (mucA).